The sequence spans 218 residues: Transaldolase (218 aa).

K83 serves as the catalytic Schiff-base intermediate with substrate.

It belongs to the transaldolase family. Type 3B subfamily.

The protein resides in the cytoplasm. The catalysed reaction is D-sedoheptulose 7-phosphate + D-glyceraldehyde 3-phosphate = D-erythrose 4-phosphate + beta-D-fructose 6-phosphate. It participates in carbohydrate degradation; pentose phosphate pathway; D-glyceraldehyde 3-phosphate and beta-D-fructose 6-phosphate from D-ribose 5-phosphate and D-xylulose 5-phosphate (non-oxidative stage): step 2/3. Functionally, transaldolase is important for the balance of metabolites in the pentose-phosphate pathway. Does not show fructose-6-P aldolase activity. This is Transaldolase (tal) from Thermotoga maritima (strain ATCC 43589 / DSM 3109 / JCM 10099 / NBRC 100826 / MSB8).